Reading from the N-terminus, the 211-residue chain is Probable nicotinate-nucleotide adenylyltransferase (211 aa).

Belongs to the NadD family.

It catalyses the reaction nicotinate beta-D-ribonucleotide + ATP + H(+) = deamido-NAD(+) + diphosphate. It functions in the pathway cofactor biosynthesis; NAD(+) biosynthesis; deamido-NAD(+) from nicotinate D-ribonucleotide: step 1/1. Functionally, catalyzes the reversible adenylation of nicotinate mononucleotide (NaMN) to nicotinic acid adenine dinucleotide (NaAD). The protein is Probable nicotinate-nucleotide adenylyltransferase of Wigglesworthia glossinidia brevipalpis.